A 333-amino-acid chain; its full sequence is Isoaspartyl peptidase/L-asparaginase (333 aa).

Thr191 (nucleophile) is an active-site residue. Residues 219–222 (RVGD) and 242–245 (TGHG) each bind substrate.

Belongs to the Ntn-hydrolase family. In terms of assembly, heterodimer of an alpha and beta chain produced by autocleavage. This heterodimer may then dimerize in turn, giving rise to a heterotetramer. In terms of processing, cleaved into an alpha and beta chain by autocatalysis; this activates the enzyme. The N-terminal residue of the beta subunit is responsible for the nucleophile hydrolase activity. In terms of tissue distribution, present in testis, brain, liver, kidney, heart and skeletal muscle. In brain, specifically present in the astrocytic lineage. Present in sperm (at protein level).

It localises to the cytoplasm. The enzyme catalyses L-asparagine + H2O = L-aspartate + NH4(+). It carries out the reaction Cleavage of a beta-linked Asp residue from the N-terminus of a polypeptide.. Its function is as follows. Has both L-asparaginase and beta-aspartyl peptidase activity. Is highly active with L-Asp beta-methyl ester. Besides, has catalytic activity toward beta-aspartyl dipeptides and their methyl esters, including beta-L-Asp-L-Phe, beta-L-Asp-L-Phe methyl ester (aspartame), beta-L-Asp-L-Ala, beta-L-Asp-L-Leu and beta-L-Asp-L-Lys. Does not have aspartylglucosaminidase activity and is inactive toward GlcNAc-L-Asn. Likewise, has no activity toward glutamine. May be involved in the production of L-aspartate, which can act as an excitatory neurotransmitter in some brain regions. The protein is Isoaspartyl peptidase/L-asparaginase (Asrgl1) of Rattus norvegicus (Rat).